We begin with the raw amino-acid sequence, 101 residues long: Chaperone modulatory protein CbpM (101 aa).

Belongs to the CbpM family.

Functionally, interacts with CbpA and inhibits both the DnaJ-like co-chaperone activity and the DNA binding activity of CbpA. Together with CbpA, modulates the activity of the DnaK chaperone system. Does not inhibit the co-chaperone activity of DnaJ. The chain is Chaperone modulatory protein CbpM from Escherichia coli (strain K12 / MC4100 / BW2952).